We begin with the raw amino-acid sequence, 975 residues long: Translation initiation factor IF-2 (975 aa).

2 stretches are compositionally biased toward basic and acidic residues: residues 48–63 and 120–177; these read DHLR…DKRK and AELK…EAAA. 2 disordered regions span residues 48 to 85 and 98 to 390; these read DHLR…KART and KRDD…PTEP. The span at 178–211 shows a compositional bias: low complexity; sequence KRAAAAQAEAAQQAAAAREQAQRAQSEPAEQSAQ. Basic and acidic residues predominate over residues 212–263; that stretch reads DEARAAAERAAQREAAKKAEDAAREAADKARAEQEEIRKRREAAEAEARAIR. Residues 302 to 330 show a composition bias toward low complexity; the sequence is KPAGEAAAARPAAKKPASGAPAPAAAPAG. Gly residues predominate over residues 359–372; it reads SSGGVDRGWRGGPK. The tr-type G domain occupies 475–644; sequence PRPPVVTVMG…LLQAEVLELK (170 aa). A G1 region spans residues 484-491; sequence GHVDHGKT. 484-491 is a GTP binding site; sequence GHVDHGKT. The interval 509-513 is G2; the sequence is GITQH. A G3 region spans residues 530-533; sequence DTPG. GTP contacts are provided by residues 530–534 and 584–587; these read DTPGH and NKID. The interval 584–587 is G4; that stretch reads NKID. Residues 620-622 form a G5 region; it reads SAK.

The protein belongs to the TRAFAC class translation factor GTPase superfamily. Classic translation factor GTPase family. IF-2 subfamily.

Its subcellular location is the cytoplasm. In terms of biological role, one of the essential components for the initiation of protein synthesis. Protects formylmethionyl-tRNA from spontaneous hydrolysis and promotes its binding to the 30S ribosomal subunits. Also involved in the hydrolysis of GTP during the formation of the 70S ribosomal complex. The sequence is that of Translation initiation factor IF-2 from Burkholderia pseudomallei (strain 1106a).